The following is a 461-amino-acid chain: Phosphomethylpyrimidine synthase (461 aa).

Residues Asn-80, Met-109, Tyr-139, His-174, 194–196, 235–238, and Glu-274 contribute to the substrate site; these read SRG and DSLR. His-278 contributes to the Zn(2+) binding site. Substrate is bound at residue Tyr-301. His-342 serves as a coordination point for Zn(2+). 3 residues coordinate [4Fe-4S] cluster: Cys-422, Cys-425, and Cys-430.

It belongs to the ThiC family. In terms of assembly, homodimer. It depends on [4Fe-4S] cluster as a cofactor.

It carries out the reaction 5-amino-1-(5-phospho-beta-D-ribosyl)imidazole + S-adenosyl-L-methionine = 4-amino-2-methyl-5-(phosphooxymethyl)pyrimidine + CO + 5'-deoxyadenosine + formate + L-methionine + 3 H(+). It functions in the pathway cofactor biosynthesis; thiamine diphosphate biosynthesis. Catalyzes the synthesis of the hydroxymethylpyrimidine phosphate (HMP-P) moiety of thiamine from aminoimidazole ribotide (AIR) in a radical S-adenosyl-L-methionine (SAM)-dependent reaction. In Nautilia profundicola (strain ATCC BAA-1463 / DSM 18972 / AmH), this protein is Phosphomethylpyrimidine synthase.